A 208-amino-acid chain; its full sequence is Large ribosomal subunit protein uL3 (208 aa).

Glutamine 149 carries the post-translational modification N5-methylglutamine.

It belongs to the universal ribosomal protein uL3 family. Part of the 50S ribosomal subunit. Forms a cluster with proteins L14 and L19. Post-translationally, methylated by PrmB.

Its function is as follows. One of the primary rRNA binding proteins, it binds directly near the 3'-end of the 23S rRNA, where it nucleates assembly of the 50S subunit. The polypeptide is Large ribosomal subunit protein uL3 (Histophilus somni (strain 129Pt) (Haemophilus somnus)).